The primary structure comprises 319 residues: tRNA uridine(34) hydroxylase (319 aa).

The region spanning 124 to 218 is the Rhodanese domain; the sequence is LDEDTVILDA…YGKNEETKGE (95 aa). Cys178 acts as the Cysteine persulfide intermediate in catalysis.

It belongs to the TrhO family.

The enzyme catalyses uridine(34) in tRNA + AH2 + O2 = 5-hydroxyuridine(34) in tRNA + A + H2O. Functionally, catalyzes oxygen-dependent 5-hydroxyuridine (ho5U) modification at position 34 in tRNAs. This Listeria monocytogenes serotype 4a (strain HCC23) protein is tRNA uridine(34) hydroxylase.